We begin with the raw amino-acid sequence, 622 residues long: Chaperone protein HscA homolog (622 aa).

Belongs to the heat shock protein 70 family.

Functionally, chaperone involved in the maturation of iron-sulfur cluster-containing proteins. Has a low intrinsic ATPase activity which is markedly stimulated by HscB. This chain is Chaperone protein HscA homolog, found in Burkholderia cenocepacia (strain HI2424).